The following is a 180-amino-acid chain: ATP-dependent protease subunit HslV (180 aa).

The active site involves Thr-7. Residues Gly-165, Cys-168, and Thr-171 each contribute to the Na(+) site.

This sequence belongs to the peptidase T1B family. HslV subfamily. As to quaternary structure, a double ring-shaped homohexamer of HslV is capped on each side by a ring-shaped HslU homohexamer. The assembly of the HslU/HslV complex is dependent on binding of ATP.

The protein localises to the cytoplasm. The catalysed reaction is ATP-dependent cleavage of peptide bonds with broad specificity.. With respect to regulation, allosterically activated by HslU binding. Its function is as follows. Protease subunit of a proteasome-like degradation complex believed to be a general protein degrading machinery. The sequence is that of ATP-dependent protease subunit HslV from Bacillus cereus (strain ATCC 10987 / NRS 248).